The sequence spans 689 residues: Glycine--tRNA ligase beta subunit (689 aa).

Belongs to the class-II aminoacyl-tRNA synthetase family. Tetramer of two alpha and two beta subunits.

The protein resides in the cytoplasm. The enzyme catalyses tRNA(Gly) + glycine + ATP = glycyl-tRNA(Gly) + AMP + diphosphate. The protein is Glycine--tRNA ligase beta subunit of Serratia proteamaculans (strain 568).